The following is a 193-amino-acid chain: ATP-dependent Clp protease proteolytic subunit (193 aa).

The Nucleophile role is filled by Ser-98. His-123 is an active-site residue.

The protein belongs to the peptidase S14 family. Fourteen ClpP subunits assemble into 2 heptameric rings which stack back to back to give a disk-like structure with a central cavity, resembling the structure of eukaryotic proteasomes.

The protein localises to the cytoplasm. It carries out the reaction Hydrolysis of proteins to small peptides in the presence of ATP and magnesium. alpha-casein is the usual test substrate. In the absence of ATP, only oligopeptides shorter than five residues are hydrolyzed (such as succinyl-Leu-Tyr-|-NHMec, and Leu-Tyr-Leu-|-Tyr-Trp, in which cleavage of the -Tyr-|-Leu- and -Tyr-|-Trp bonds also occurs).. Cleaves peptides in various proteins in a process that requires ATP hydrolysis. Has a chymotrypsin-like activity. Plays a major role in the degradation of misfolded proteins. This chain is ATP-dependent Clp protease proteolytic subunit, found in Lachnospira eligens (strain ATCC 27750 / DSM 3376 / VPI C15-48 / C15-B4) (Eubacterium eligens).